Reading from the N-terminus, the 496-residue chain is Chaperone SurA (496 aa).

A signal peptide spans 1 to 42 (MACKSTAVRSATRVAPTRRLGMVTGALVALMAGAALLPAAHA). The disordered stretch occupies residues 53-80 (RGIFTTPDASPSQPLLRGTLPGPSTASG). 2 consecutive PpiC domains span residues 235–337 (VQEY…KLVD) and 349–447 (VAQT…QVEG).

It is found in the periplasm. The enzyme catalyses [protein]-peptidylproline (omega=180) = [protein]-peptidylproline (omega=0). Its function is as follows. Chaperone involved in the correct folding and assembly of outer membrane proteins. Recognizes specific patterns of aromatic residues and the orientation of their side chains, which are found more frequently in integral outer membrane proteins. May act in both early periplasmic and late outer membrane-associated steps of protein maturation. This Ralstonia nicotianae (strain ATCC BAA-1114 / GMI1000) (Ralstonia solanacearum) protein is Chaperone SurA.